Consider the following 401-residue polypeptide: 8-amino-7-oxononanoate synthase (401 aa).

A substrate-binding site is contributed by Arg-24. 111 to 112 (GF) is a pyridoxal 5'-phosphate binding site. His-137 is a binding site for substrate. Pyridoxal 5'-phosphate-binding residues include Ser-183, His-211, and Thr-240. Position 243 is an N6-(pyridoxal phosphate)lysine (Lys-243). Substrate is bound at residue Thr-357.

This sequence belongs to the class-II pyridoxal-phosphate-dependent aminotransferase family. BioF subfamily. In terms of assembly, homodimer. Pyridoxal 5'-phosphate is required as a cofactor.

The catalysed reaction is 6-carboxyhexanoyl-[ACP] + L-alanine + H(+) = (8S)-8-amino-7-oxononanoate + holo-[ACP] + CO2. The protein operates within cofactor biosynthesis; biotin biosynthesis. Catalyzes the decarboxylative condensation of pimeloyl-[acyl-carrier protein] and L-alanine to produce 8-amino-7-oxononanoate (AON), [acyl-carrier protein], and carbon dioxide. This Xylella fastidiosa (strain M23) protein is 8-amino-7-oxononanoate synthase.